The primary structure comprises 591 residues: Aspartate--tRNA(Asp/Asn) ligase (591 aa).

E176 is an L-aspartate binding site. The aspartate stretch occupies residues 200–203; that stretch reads QLFK. Position 222 (R222) interacts with L-aspartate. ATP is bound by residues 222–224 and Q231; that span reads RDE. H450 is a binding site for L-aspartate. E484 contributes to the ATP binding site. L-aspartate is bound at residue R491. 536–539 lines the ATP pocket; it reads GLDR.

The protein belongs to the class-II aminoacyl-tRNA synthetase family. Type 1 subfamily. Homodimer.

The protein localises to the cytoplasm. It catalyses the reaction tRNA(Asx) + L-aspartate + ATP = L-aspartyl-tRNA(Asx) + AMP + diphosphate. Aspartyl-tRNA synthetase with relaxed tRNA specificity since it is able to aspartylate not only its cognate tRNA(Asp) but also tRNA(Asn). Reaction proceeds in two steps: L-aspartate is first activated by ATP to form Asp-AMP and then transferred to the acceptor end of tRNA(Asp/Asn). This is Aspartate--tRNA(Asp/Asn) ligase from Bacillus cereus (strain ATCC 10987 / NRS 248).